A 60-amino-acid chain; its full sequence is Large ribosomal subunit protein uL30 (60 aa).

The protein belongs to the universal ribosomal protein uL30 family. As to quaternary structure, part of the 50S ribosomal subunit.

The polypeptide is Large ribosomal subunit protein uL30 (Christiangramia forsetii (strain DSM 17595 / CGMCC 1.15422 / KT0803) (Gramella forsetii)).